The primary structure comprises 227 residues: dTTP/UTP pyrophosphatase (227 aa).

Catalysis depends on Asp98, which acts as the Proton acceptor.

Belongs to the Maf family. YhdE subfamily. A divalent metal cation serves as cofactor.

The protein localises to the cytoplasm. The catalysed reaction is dTTP + H2O = dTMP + diphosphate + H(+). The enzyme catalyses UTP + H2O = UMP + diphosphate + H(+). Its function is as follows. Nucleoside triphosphate pyrophosphatase that hydrolyzes dTTP and UTP. May have a dual role in cell division arrest and in preventing the incorporation of modified nucleotides into cellular nucleic acids. This chain is dTTP/UTP pyrophosphatase, found in Bartonella quintana (strain Toulouse) (Rochalimaea quintana).